A 426-amino-acid chain; its full sequence is Glutamate-1-semialdehyde 2,1-aminomutase (426 aa).

Lysine 265 is modified (N6-(pyridoxal phosphate)lysine).

The protein belongs to the class-III pyridoxal-phosphate-dependent aminotransferase family. HemL subfamily. Homodimer. Pyridoxal 5'-phosphate serves as cofactor.

The protein resides in the cytoplasm. The enzyme catalyses (S)-4-amino-5-oxopentanoate = 5-aminolevulinate. The protein operates within porphyrin-containing compound metabolism; protoporphyrin-IX biosynthesis; 5-aminolevulinate from L-glutamyl-tRNA(Glu): step 2/2. The sequence is that of Glutamate-1-semialdehyde 2,1-aminomutase from Actinobacillus pleuropneumoniae serotype 5b (strain L20).